Consider the following 1625-residue polypeptide: Probable cation-transporting ATPase I (1625 aa).

8 helical membrane-spanning segments follow: residues 148–168, 177–197, 358–378, 637–657, 673–693, 778–798, 968–988, and 997–1017; these read VVSAVAADIFLAGSVSSPNSA, LAILVPLTAAAMDLVAMGATV, LIAAASALVAGGGTEDAAGAI, ASESAVHLAQGGTTLAGLLLV, WLNPVNAAAATALVSGMWSAA, ILAVGAAASAIVGSNIDALLV, LTSKVLPMTLAGGAAVTALAL, and AVADGVAIAVAAVPEGLPLVA. The active-site 4-aspartylphosphate intermediate is D1053. Mg(2+) contacts are provided by D1340 and D1344. Transmembrane regions (helical) follow at residues 1401-1421, 1432-1452, and 1547-1567; these read ILVGGNVGEVLFTVIGTAFGA, LLVNLLTDMFPALAVAVTSQF, and VIATALGSAGVLVGIIQTPVI.

The protein belongs to the cation transport ATPase (P-type) (TC 3.A.3) family.

The protein resides in the cell membrane. It carries out the reaction ATP + H2O = ADP + phosphate + H(+). This Mycobacterium tuberculosis (strain CDC 1551 / Oshkosh) protein is Probable cation-transporting ATPase I (ctpI).